The following is a 134-amino-acid chain: uncharacterized protein (134 aa).

The next 2 helical transmembrane spans lie at 16 to 36 and 43 to 63; these read IFSF…NTKL and IAYF…IHGT.

The protein belongs to the plectrovirus ORF5 family.

The protein resides in the host membrane. This is an uncharacterized protein from Spiroplasma citri (SpV1).